The chain runs to 122 residues: Large ribosomal subunit protein uL14 (122 aa).

The protein belongs to the universal ribosomal protein uL14 family. Part of the 50S ribosomal subunit. Forms a cluster with proteins L3 and L19. In the 70S ribosome, L14 and L19 interact and together make contacts with the 16S rRNA in bridges B5 and B8.

Its function is as follows. Binds to 23S rRNA. Forms part of two intersubunit bridges in the 70S ribosome. This Aeromonas salmonicida (strain A449) protein is Large ribosomal subunit protein uL14.